Here is a 228-residue protein sequence, read N- to C-terminus: Uracil-DNA glycosylase (228 aa).

The Proton acceptor role is filled by Asp-64.

The protein belongs to the uracil-DNA glycosylase (UDG) superfamily. UNG family.

Its subcellular location is the cytoplasm. The catalysed reaction is Hydrolyzes single-stranded DNA or mismatched double-stranded DNA and polynucleotides, releasing free uracil.. Its function is as follows. Excises uracil residues from the DNA which can arise as a result of misincorporation of dUMP residues by DNA polymerase or due to deamination of cytosine. The sequence is that of Uracil-DNA glycosylase from Pectobacterium carotovorum subsp. carotovorum (strain PC1).